The sequence spans 859 residues: Homeobox-leucine zipper protein HOX32 (859 aa).

Residues 7–31 (AAVHGVGRQDRSSPGGGGAPQVDTG) are disordered. The homeobox DNA-binding region spans 29–92 (DTGKYVRYTP…NRRCREKQRK (64 aa)). A coiled-coil region spans residues 100–129 (VNRKLTAMNKLLMEENDRLQKQVSRLVYEN). The span at 146 to 164 (TSCESVVTSGQHHQQQNPA) shows a compositional bias: polar residues. The segment at 146 to 172 (TSCESVVTSGQHHQQQNPAATRPQRDA) is disordered. Positions 171–393 (DANNPAGLLA…LRHIRQIAHE (223 aa)) constitute an START domain.

It belongs to the HD-ZIP homeobox family. Class III subfamily. In terms of tissue distribution, expressed in seedlings, roots, stems, leaf sheaths and blades and panicles.

The protein localises to the nucleus. Its function is as follows. Probable transcription factor. The polypeptide is Homeobox-leucine zipper protein HOX32 (HOX32) (Oryza sativa subsp. japonica (Rice)).